Consider the following 447-residue polypeptide: Putative metabolite transport protein HI_0418 (447 aa).

Residues M1–M28 are Cytoplasmic-facing. Residues V29–F49 traverse the membrane as a helical segment. Residues N50–Q63 are Periplasmic-facing. The helical transmembrane segment at I64–F84 threads the bilayer. Residues G85–T96 lie on the Cytoplasmic side of the membrane. A helical membrane pass occupies residues F97 to Y117. The Periplasmic portion of the chain corresponds to D118–S119. A helical membrane pass occupies residues I120–G140. The Cytoplasmic portion of the chain corresponds to G141–Q167. A helical transmembrane segment spans residues L168–F188. The Periplasmic segment spans residues G189 to T194. A helical transmembrane segment spans residues E195–V215. Residues R216–P249 are Cytoplasmic-facing. A helical membrane pass occupies residues F250–F270. Topologically, residues S271–Q295 are periplasmic. Residues I296–G316 traverse the membrane as a helical segment. Over K317–R325 the chain is Cytoplasmic. Residues T326–L346 form a helical membrane-spanning segment. Residues E347–L354 lie on the Periplasmic side of the membrane. A helical transmembrane segment spans residues F355–F375. The Cytoplasmic portion of the chain corresponds to L376–S390. A helical membrane pass occupies residues L391–L411. Over N412–K418 the chain is Periplasmic. Residues G419–S439 form a helical membrane-spanning segment. The Cytoplasmic segment spans residues E440–S447.

This sequence belongs to the major facilitator superfamily. Metabolite:H+ Symporter (MHS) family (TC 2.A.1.6) family.

The protein resides in the cell inner membrane. The protein is Putative metabolite transport protein HI_0418 of Haemophilus influenzae (strain ATCC 51907 / DSM 11121 / KW20 / Rd).